The primary structure comprises 486 residues: Glutamyl-tRNA(Gln) amidotransferase subunit A (486 aa).

Active-site charge relay system residues include Lys-79 and Ser-154. The active-site Acyl-ester intermediate is Ser-178.

It belongs to the amidase family. GatA subfamily. In terms of assembly, heterotrimer of A, B and C subunits.

It carries out the reaction L-glutamyl-tRNA(Gln) + L-glutamine + ATP + H2O = L-glutaminyl-tRNA(Gln) + L-glutamate + ADP + phosphate + H(+). Allows the formation of correctly charged Gln-tRNA(Gln) through the transamidation of misacylated Glu-tRNA(Gln) in organisms which lack glutaminyl-tRNA synthetase. The reaction takes place in the presence of glutamine and ATP through an activated gamma-phospho-Glu-tRNA(Gln). This chain is Glutamyl-tRNA(Gln) amidotransferase subunit A, found in Myxococcus xanthus (strain DK1622).